A 548-amino-acid chain; its full sequence is Probable manganese-dependent inorganic pyrophosphatase (548 aa).

Positions 1–74 are PPase part 1; sequence MKALERVYVI…HIETLEPTVE (74 aa). Positions 12, 16, and 18 each coordinate Mn(2+). 2 consecutive CBS domains span residues 77-132 and 254-311; these read ELKN…RLKI and MSKK…VILV. The interval 306-548 is PPase part 2; sequence KKVILVDHNE…KIGEVLRRER (243 aa). Mn(2+)-binding residues include D312, H334, and D386.

This sequence belongs to the PPase class C family. Mn(2+) serves as cofactor.

It is found in the cytoplasm. It catalyses the reaction diphosphate + H2O = 2 phosphate + H(+). The chain is Probable manganese-dependent inorganic pyrophosphatase (ppaC) from Thermotoga maritima (strain ATCC 43589 / DSM 3109 / JCM 10099 / NBRC 100826 / MSB8).